Consider the following 544-residue polypeptide: MTRFVFITGGVVSSLGKGIASAALGALLQARGYSVRLRKLDPYLNVDPGTMSPYQHGEVFVTDDGAETDLDLGHYERFTGVHARKSDNATTGRIYSDVIARERRGDYLGATVQVIPHITDAIKDAVTRDLNQDLDFALIEIGGTVGDIESLPFLEAIRQLGNELGPSRTMFVHLTLVPYIPSAGELKTKPTQHSVKELQNVGIQPNMLLCRCDRLIPENERRKIANFCNVRQEAVVSALDVDTIYSVPIRYHEEGMDREVLRHFNLPIGGEPDLTRWREIADVVRAPDGVVKIAIVGKYITLLDSYKSLAEALVHGGIANRVKVEIDWVDSQIFEQADSVQRLEGVHGILVPGGFGERGAEGKIEAVRFAREHKVPFLGICFGMQMAVIEAARNLAGLPDASSTEFGPCEVPIVGLMTEWARGNDLERRSASGDLGGTMRLGSYPAALIEGSLARETYGGVPVVQERHRHRYEVNIHYREQLEAVGLRFSGLSPDGVLPEIVEYADHPWFVGVQYHPELKSKPFDPHPLFSGFVAAAVRQARLV.

The segment at 1-266 is amidoligase domain; it reads MTRFVFITGG…DREVLRHFNL (266 aa). CTP is bound at residue Ser-13. UTP is bound at residue Ser-13. 14–19 is a binding site for ATP; that stretch reads SLGKGI. An L-glutamine-binding site is contributed by Tyr-54. Asp-71 serves as a coordination point for ATP. Residues Asp-71 and Glu-140 each coordinate Mg(2+). CTP is bound by residues 147-149, 187-192, and Lys-223; these read DIE and KTKPTQ. Residues 187 to 192 and Lys-223 contribute to the UTP site; that span reads KTKPTQ. In terms of domain architecture, Glutamine amidotransferase type-1 spans 292–543; it reads KIAIVGKYIT…VAAAVRQARL (252 aa). Gly-354 is an L-glutamine binding site. The active-site Nucleophile; for glutamine hydrolysis is the Cys-381. L-glutamine is bound by residues 382-385, Glu-405, and Arg-471; that span reads FGMQ. Active-site residues include His-516 and Glu-518.

This sequence belongs to the CTP synthase family. In terms of assembly, homotetramer.

It carries out the reaction UTP + L-glutamine + ATP + H2O = CTP + L-glutamate + ADP + phosphate + 2 H(+). The enzyme catalyses L-glutamine + H2O = L-glutamate + NH4(+). It catalyses the reaction UTP + NH4(+) + ATP = CTP + ADP + phosphate + 2 H(+). It participates in pyrimidine metabolism; CTP biosynthesis via de novo pathway; CTP from UDP: step 2/2. Its activity is regulated as follows. Allosterically activated by GTP, when glutamine is the substrate; GTP has no effect on the reaction when ammonia is the substrate. The allosteric effector GTP functions by stabilizing the protein conformation that binds the tetrahedral intermediate(s) formed during glutamine hydrolysis. Inhibited by the product CTP, via allosteric rather than competitive inhibition. Functionally, catalyzes the ATP-dependent amination of UTP to CTP with either L-glutamine or ammonia as the source of nitrogen. Regulates intracellular CTP levels through interactions with the four ribonucleotide triphosphates. In Granulibacter bethesdensis (strain ATCC BAA-1260 / CGDNIH1), this protein is CTP synthase.